The primary structure comprises 86 residues: Small ribosomal subunit protein bS16 (86 aa).

This sequence belongs to the bacterial ribosomal protein bS16 family.

This Borreliella burgdorferi (strain ATCC 35210 / DSM 4680 / CIP 102532 / B31) (Borrelia burgdorferi) protein is Small ribosomal subunit protein bS16.